Here is an 843-residue protein sequence, read N- to C-terminus: Tetratricopeptide repeat protein 7B (843 aa).

One copy of the TPR 1 repeat lies at 97-131 (QESNLIMAKLNYVEGDYKEALNIYARVGLDDLPLT). A phosphoserine mark is found at Ser-160 and Ser-202. TPR repeat units follow at residues 219–252 (ETGL…VETR), 363–396 (SVVY…AFEE), 397–430 (FHLW…KPDD), 479–514 (TYSL…SPTD), 516–548 (QAAF…QGDD), and 549–582 (ANSL…YPEN). Phosphoserine is present on residues Ser-625, Ser-629, Ser-630, Ser-673, Ser-677, Ser-678, and Ser-681. 4 TPR repeats span residues 696–729 (AQIW…FPMS), 730–763 (HNVL…SPTH), 765–797 (KSMQ…NSTA), and 798–831 (HEVW…EASS).

As to quaternary structure, component of a phosphatidylinositol 4-kinase (PI4K) complex, composed of PI4KA, EFR3 (EFR3A or EFR3B), TTC7 (TTC7A or TTC7B) and HYCC (HYCC1 or HYCC2). Interacts with PI4KA, interaction is direct. Interacts with EFR3 (EFR3A or EFR3B), interaction is direct. Interacts with HYCC (HYCC1 or HYCC2), interaction is direct. Association with the PI4K complex is strongly reduced by TMEM150A.

It localises to the cytoplasm. It is found in the cytosol. Its subcellular location is the cell membrane. Its function is as follows. Component of a complex required to localize phosphatidylinositol 4-kinase (PI4K) to the plasma membrane. The complex acts as a regulator of phosphatidylinositol 4-phosphate (PtdIns(4)P) synthesis. In the complex, plays a central role in bridging PI4KA to EFR3B and HYCC1, via direct interactions. This is Tetratricopeptide repeat protein 7B (TTC7B) from Homo sapiens (Human).